The following is a 252-amino-acid chain: C-type lectin domain family 2 member D3 (252 aa).

The tract at residues 1–58 (MSSSAHLQDAPPLLSGTLTQNEGQTSLRQSSSCGPSAASASESLSGYTESRIPHSKVR) is disordered. Residues 1 to 78 (MSSSAHLQDA…ESRVKRYCCY (78 aa)) are Cytoplasmic-facing. A compositionally biased stretch (polar residues) spans 16 to 29 (GTLTQNEGQTSLRQ). The span at 30–43 (SSSCGPSAASASES) shows a compositional bias: low complexity. The chain crosses the membrane as a helical; Signal-anchor for type II membrane protein span at residues 79–99 (GGVITVVAIAIVVPLSVTLSV). Residues 100–252 (KQMEQTSINN…KPKKYISQSQ (153 aa)) are Extracellular-facing. The region spanning 137-242 (YGNKCFYFSE…VYVERPWICS (106 aa)) is the C-type lectin domain. Asn-150 carries N-linked (GlcNAc...) asparagine glycosylation. A disulfide bridge connects residues Cys-158 and Cys-241.

It localises to the cell membrane. Functionally, lectin-type cell surface receptor. The chain is C-type lectin domain family 2 member D3 (Clec2d3) from Rattus norvegicus (Rat).